The primary structure comprises 566 residues: Arginine--tRNA ligase (566 aa).

The short motif at 124–134 (ANPNGPLHIGH) is the 'HIGH' region element.

The protein belongs to the class-I aminoacyl-tRNA synthetase family.

The protein localises to the cytoplasm. It carries out the reaction tRNA(Arg) + L-arginine + ATP = L-arginyl-tRNA(Arg) + AMP + diphosphate. This is Arginine--tRNA ligase (argS) from Methanocaldococcus jannaschii (strain ATCC 43067 / DSM 2661 / JAL-1 / JCM 10045 / NBRC 100440) (Methanococcus jannaschii).